The following is a 527-amino-acid chain: Thymidine kinase (527 aa).

The disordered stretch occupies residues Met-1 to Phe-57. The span at Lys-9 to Arg-18 shows a compositional bias: basic and acidic residues. The span at Tyr-32–Thr-41 shows a compositional bias: polar residues. Gly-216–Thr-223 contacts ATP. The active-site Proton acceptor is Glu-243. Substrate is bound by residues Tyr-260 and Gln-281. Arg-368 provides a ligand contact to ATP. Arg-374 contacts substrate.

The protein belongs to the herpesviridae thymidine kinase family. As to quaternary structure, homodimer.

It catalyses the reaction thymidine + ATP = dTMP + ADP + H(+). Its function is as follows. Catalyzes the transfer of the gamma-phospho group of ATP to thymidine to generate dTMP in the salvage pathway of pyrimidine synthesis. The dTMP serves as a substrate for DNA polymerase during viral DNA replication. Allows the virus to be reactivated and to grow in non-proliferative cells lacking a high concentration of phosphorylated nucleic acid precursors. This chain is Thymidine kinase, found in Saimiriine herpesvirus 2 (strain 11) (SaHV-2).